The primary structure comprises 391 residues: Glycerophosphocholine acyltransferase 1 (391 aa).

Residues 1–66 are Cytoplasmic-facing; that stretch reads MSNNEDPINE…IAKQAEEHES (66 aa). The helical transmembrane segment at 67-87 threads the bilayer; sequence FINKVTHLLGVLGFGGFCFLL. Over 88–92 the chain is Lumenal; the sequence is GARPQ. A helical membrane pass occupies residues 93-113; that stretch reads DIPYVYCLFFFIFVPLRWIYY. Topologically, residues 114-119 are cytoplasmic; sequence RFKKWH. A helical transmembrane segment spans residues 120–140; the sequence is YFLLDFCYYANTIFLVDLLLY. Topologically, residues 141-144 are lumenal; sequence PKDE. The chain crosses the membrane as a helical span at residues 145-165; that stretch reads KLFMVCFSFAEGPLAWALIVW. Topologically, residues 166–172 are cytoplasmic; that stretch reads RCSLVFS. A helical transmembrane segment spans residues 173–193; it reads SVDKIVSVLIHLLPGLVFFTI. The Lumenal portion of the chain corresponds to 194-226; that stretch reads RWWNPATFEAMHPEGTSGRASWPYVEDKSFLFT. A helical membrane pass occupies residues 227-247; sequence WLFLVPLVAYFLWQLLYFLIV. Residues 248 to 294 lie on the Cytoplasmic side of the membrane; it reads NVLRRQRLLRDPEVMTSYRELSKKAQKANNVWWRLSGLLGDQNRMLM. A helical membrane pass occupies residues 295-315; it reads YILLQALFTVATTALTVPIFL. The Lumenal portion of the chain corresponds to 316 to 318; it reads SYE. The chain crosses the membrane as a helical span at residues 319 to 339; that stretch reads LHAVFQILKVSAAVWNGGSFL. Residues 340-391 lie on the Cytoplasmic side of the membrane; that stretch reads LDVMPRQVILKEKKKSELQPAHIQQYHSEPKQDQSPNSMEIRMKTIHSAEEQ. Residues 354 to 391 are disordered; it reads KSELQPAHIQQYHSEPKQDQSPNSMEIRMKTIHSAEEQ. Basic and acidic residues predominate over residues 380–391; sequence IRMKTIHSAEEQ.

It belongs to the GPC1 family.

The protein localises to the membrane. The enzyme catalyses sn-glycerol 3-phosphocholine + an acyl-CoA = a monoacyl-sn-glycero-3-phosphocholine + CoA. It catalyses the reaction sn-glycero-3-phosphoethanolamine + an acyl-CoA = a monoacyl-sn-glycero-3-phosphoethanolamine + CoA. It carries out the reaction sn-glycerol 3-phosphocholine + hexadecanoyl-CoA = hexadecanoyl-sn-glycero-3-phosphocholine + CoA. The catalysed reaction is (9Z)-hexadecenoyl-CoA + sn-glycerol 3-phosphocholine = (9Z-hexadecenoyl)-sn-glycero-3-phosphocholine + CoA. The enzyme catalyses (9Z,12Z)-octadecadienoyl-CoA + sn-glycerol 3-phosphocholine = (9Z,12Z-octadecadienoyl)-sn-glycero-3-phosphocholine + CoA. It catalyses the reaction (12R)-hydroxy-(9Z)-octadecenoyl-CoA + sn-glycerol 3-phosphocholine = (12R-hydroxy-9Z-octadecenoyl)-sn-glycero-3-phosphocholine + CoA. It carries out the reaction (9Z,12Z,15Z)-octadecatrienoyl-CoA + sn-glycerol 3-phosphocholine = (9Z,12Z,15Z-octadecatrienoyl)-sn-glycero-3-phosphocholine + CoA. The catalysed reaction is sn-glycerol 3-phosphocholine + (9Z)-octadecenoyl-CoA = (9Z-octadecenoyl)-sn-glycero-3-phosphocholine + CoA. Glycerophosphocholine acyltransferase (GPCAT) that utilizes acyl-CoA to acylate glycero-3-phosphocholine (GPC), forming lysophosphatidylcholine (LPC). Shows broad acyl specificities with a preference for 16:0-CoA, polyunsaturated acyl-CoA, and the hydroxylated ricinoleoyl-CoA. Also catalyzes the acylation of glycero-3-phosphoethanolamine (GPE) with acyl-CoA. In addition to acyl-CoA, GPCAT efficiently utilizes LPC and lysophosphatidylethanolamine (LPE) as acyl donors in the acylation of GPC. Contributes to the maintenance of phosphatidylcholine (PC) homeostasis and might also have specific functions in acyl editing of PC, such as transferring acyl groups modified at the sn-2 position of PC to the sn-1. The polypeptide is Glycerophosphocholine acyltransferase 1 (Ricinus communis (Castor bean)).